We begin with the raw amino-acid sequence, 150 residues long: Cytochrome c-type biogenesis protein CcmE (150 aa).

Over 1–9 (MRNLKKTRR) the chain is Cytoplasmic. Residues 10-30 (IQILLVAGGALVLSTALIGYG) form a helical; Signal-anchor for type II membrane protein membrane-spanning segment. Over 31 to 150 (MRDGINFFRA…VYRDPAQPEG (120 aa)) the chain is Periplasmic. Residues His123 and Tyr127 each coordinate heme.

This sequence belongs to the CcmE/CycJ family.

It is found in the cell inner membrane. In terms of biological role, heme chaperone required for the biogenesis of c-type cytochromes. Transiently binds heme delivered by CcmC and transfers the heme to apo-cytochromes in a process facilitated by CcmF and CcmH. This chain is Cytochrome c-type biogenesis protein CcmE, found in Rhodobacter capsulatus (strain ATCC BAA-309 / NBRC 16581 / SB1003).